A 417-amino-acid polypeptide reads, in one-letter code: Autophagy-related protein 18 (417 aa).

WD repeat units lie at residues 1–36 (MSMNFVTFNQDYSYLAVGTSKGFRIFTTDPFGKSYE), 76–114 (ELTFPTTVLAIRLNRKRLVIVLEDQIYIYDIQTMKLVYT), 185–225 (AHKS…KLYQ), and 230–269 (SMPSRIYSMSFNITSTLLCVSSATETIHIFKLGQQQGLSK). A L/FRRG motif motif is present at residues 226–230 (FRRGS). The tract at residues 267 to 300 (LSKTSSPSRKLESSRGSGDESAVESASSEMSSRK) is disordered. A compositionally biased stretch (low complexity) spans 285–296 (DESAVESASSEM). WD repeat units lie at residues 300-346 (KHNG…AWIK) and 355-395 (GGSG…GGEG).

This sequence belongs to the WD repeat PROPPIN family. Component of the PI(3,5)P2 regulatory complex.

It localises to the preautophagosomal structure membrane. The protein localises to the vacuole membrane. It is found in the endosome membrane. Its function is as follows. The PI(3,5)P2 regulatory complex regulates both the synthesis and turnover of phosphatidylinositol 3,5-bisphosphate (PtdIns(3,5)P2). Necessary for proper vacuole morphology. Plays an important role in osmotically-induced vacuole fragmentation. Required for cytoplasm to vacuole transport (Cvt) vesicle formation, pexophagy and starvation-induced autophagy. Involved in correct ATG9 trafficking to the pre-autophagosomal structure. Might also be involved in premeiotic DNA replication. This Coccidioides immitis (strain RS) (Valley fever fungus) protein is Autophagy-related protein 18 (ATG18).